Here is a 983-residue protein sequence, read N- to C-terminus: Kinesin-like protein KIN-14I (983 aa).

A Calponin-homology (CH) domain is found at 44–166 (ASRRYEAANW…CVLAIKSYDE (123 aa)). 2 stretches are compositionally biased toward polar residues: residues 203 to 214 (SLSRTSSINNEK) and 278 to 287 (ESTSSQNNRS). Disordered stretches follow at residues 203-227 (SLSRTSSINNEKAPSENDSNKLSSP) and 276-295 (PRESTSSQNNRSFLKPLGER). The 326-residue stretch at 399 to 724 (SIRVYCRVRP…LKFAERVATV (326 aa)) folds into the Kinesin motor domain. An ATP-binding site is contributed by 481–488 (GQTGSGKT). A coiled-coil region spans residues 731 to 758 (VNNDTSDVKELKEQIATLKAALARKEAE). 2 disordered regions span residues 802-824 (TVNSPPWPPVASPGQAYREDDRS) and 921-983 (TRSN…NARH). The span at 939–951 (SPQSRNNSNNTVS) shows a compositional bias: polar residues.

Belongs to the TRAFAC class myosin-kinesin ATPase superfamily. Kinesin family. KIN-14 subfamily.

In Arabidopsis thaliana (Mouse-ear cress), this protein is Kinesin-like protein KIN-14I.